A 214-amino-acid polypeptide reads, in one-letter code: Adenylate kinase (214 aa).

12-17 (GVGKGT) is a binding site for ATP. The segment at 32–61 (STGNIFRSQIASNSELGIKLKEIVESGGYV) is NMP. AMP is bound by residues Thr33, Arg38, 59-61 (GYV), 88-91 (GYPR), and Gln95. Positions 126-163 (GRRICPSCNAQYHIYFKKSKLDTKCEIDQSELIQRKDD) are LID. Position 127 (Arg127) interacts with ATP. 4 residues coordinate Zn(2+): Cys130, Cys133, Cys150, and Asp153. AMP-binding residues include Arg160 and Arg171. Position 199 (Lys199) interacts with ATP.

It belongs to the adenylate kinase family. Monomer.

It is found in the cytoplasm. The catalysed reaction is AMP + ATP = 2 ADP. It functions in the pathway purine metabolism; AMP biosynthesis via salvage pathway; AMP from ADP: step 1/1. Its function is as follows. Catalyzes the reversible transfer of the terminal phosphate group between ATP and AMP. Plays an important role in cellular energy homeostasis and in adenine nucleotide metabolism. In Mycoplasmopsis pulmonis (strain UAB CTIP) (Mycoplasma pulmonis), this protein is Adenylate kinase.